A 664-amino-acid chain; its full sequence is Translation factor GUF1, mitochondrial (664 aa).

A tr-type G domain is found at Ser-63–Gln-246. Residues Ala-72 to Ser-79, Asp-139 to His-143, and Asn-193 to Asp-196 each bind GTP.

The protein belongs to the TRAFAC class translation factor GTPase superfamily. Classic translation factor GTPase family. LepA subfamily.

It is found in the mitochondrion inner membrane. It carries out the reaction GTP + H2O = GDP + phosphate + H(+). Its function is as follows. Promotes mitochondrial protein synthesis. May act as a fidelity factor of the translation reaction, by catalyzing a one-codon backward translocation of tRNAs on improperly translocated ribosomes. Binds to mitochondrial ribosomes in a GTP-dependent manner. In Clavispora lusitaniae (strain ATCC 42720) (Yeast), this protein is Translation factor GUF1, mitochondrial.